Reading from the N-terminus, the 74-residue chain is ATP synthase subunit 9, mitochondrial (74 aa).

The next 2 helical transmembrane spans lie at 8–28 (IGAG…GNVF) and 50–70 (ILGF…AFLI).

This sequence belongs to the ATPase C chain family. As to quaternary structure, F-type ATPases have 2 components, CF(1) - the catalytic core - and CF(0) - the membrane proton channel. CF(1) has five subunits: alpha(3), beta(3), gamma(1), delta(1), epsilon(1). CF(0) has three main subunits: a, b and c.

The protein resides in the mitochondrion membrane. In terms of biological role, this protein is one of the chains of the nonenzymatic membrane component (F0) of mitochondrial ATPase. The sequence is that of ATP synthase subunit 9, mitochondrial (ATP9) from Brassica napus (Rape).